The sequence spans 358 residues: Alanine racemase (358 aa).

The active-site Proton acceptor; specific for D-alanine is K34. At K34 the chain carries N6-(pyridoxal phosphate)lysine. R130 is a substrate binding site. Y254 (proton acceptor; specific for L-alanine) is an active-site residue. Substrate is bound at residue M302.

This sequence belongs to the alanine racemase family. The cofactor is pyridoxal 5'-phosphate.

It carries out the reaction L-alanine = D-alanine. It participates in amino-acid biosynthesis; D-alanine biosynthesis; D-alanine from L-alanine: step 1/1. Its function is as follows. Catalyzes the interconversion of L-alanine and D-alanine. May also act on other amino acids. The chain is Alanine racemase (alr) from Actinobacillus succinogenes (strain ATCC 55618 / DSM 22257 / CCUG 43843 / 130Z).